The following is a 1445-amino-acid chain: Spermatogenesis-associated protein 31E1 (1445 aa).

Residues 64–84 (WMMDFILTSVCGLVLLFLLLL) traverse the membrane as a helical segment. Disordered regions lie at residues 90 to 115 (PPSP…SRSR) and 169 to 262 (VPAK…PDSS). Residues 101-110 (SREPQRERSG) show a composition bias toward basic and acidic residues. Residues 241–260 (VFPPSPQPHGPLASSPPPPD) are compositionally biased toward pro residues. Asparagine 408 carries N-linked (GlcNAc...) asparagine glycosylation. Disordered regions lie at residues 411-430 (TQPQ…TVGN), 460-557 (NPSS…ERTQ), 592-619 (LSQP…PGVV), and 637-761 (QEQS…KEHL). The segment covering 664 to 681 (PQSQAEDTQQALLPSQPS) has biased composition (polar residues). Residues asparagine 819, asparagine 906, and asparagine 1160 are each glycosylated (N-linked (GlcNAc...) asparagine). Disordered stretches follow at residues 894 to 966 (FLGK…TCSL), 1143 to 1242 (RLPT…IGDK), 1254 to 1280 (KGQT…RKGG), and 1378 to 1445 (SPKA…CLAS). Composition is skewed to polar residues over residues 906–915 (NRTTSKSVPT) and 1148–1165 (APLS…TASQ). Residues 1202–1217 (DKGEAHRRPRTGEQGH) are compositionally biased toward basic and acidic residues.

Belongs to the SPATA31 family.

The protein localises to the membrane. Functionally, may play a role in spermatogenesis. This Homo sapiens (Human) protein is Spermatogenesis-associated protein 31E1 (SPATA31E1).